The sequence spans 1512 residues: Probable RNA-directed RNA polymerase (1512 aa).

Belongs to the totiviridae RNA-directed RNA polymerase family.

It catalyses the reaction RNA(n) + a ribonucleoside 5'-triphosphate = RNA(n+1) + diphosphate. Its function is as follows. RNA-dependent RNA polymerase which replicates the viral genome. Catalyzes the transcription of fully conservative plus-strand genomic RNAs that are extruded from the virion into the cytoplasm where they function as mRNAs for translation of viral proteins and also as substrates for encapsidation to form new virions. Once encapsidated, the positive strand is converted to dsRNA by the RNA-directed RNA polymerase. This is Probable RNA-directed RNA polymerase (gag-pol) from Saccharomyces cerevisiae virus L-BC (ScV-L-BC).